The chain runs to 393 residues: S-adenosylmethionine synthase (393 aa).

Glu-10 provides a ligand contact to Mg(2+). His-16 lines the ATP pocket. Residue Glu-44 participates in K(+) binding. L-methionine is bound by residues Glu-57 and Gln-100. Residues 168–170 (DGK), 236–239 (SGRF), Asp-247, 253–254 (RK), Ala-270, Lys-274, and Lys-278 contribute to the ATP site. Position 247 (Asp-247) interacts with L-methionine. Residue Lys-278 coordinates L-methionine.

Belongs to the AdoMet synthase family. Homotetramer. Mn(2+) serves as cofactor. Mg(2+) is required as a cofactor. The cofactor is Co(2+). Requires K(+) as cofactor.

Its subcellular location is the cytoplasm. The catalysed reaction is L-methionine + ATP + H2O = S-adenosyl-L-methionine + phosphate + diphosphate. Its pathway is amino-acid biosynthesis; S-adenosyl-L-methionine biosynthesis; S-adenosyl-L-methionine from L-methionine: step 1/1. Functionally, catalyzes the formation of S-adenosylmethionine from methionine and ATP. The reaction comprises two steps that are both catalyzed by the same enzyme: formation of S-adenosylmethionine (AdoMet) and triphosphate, and subsequent hydrolysis of the triphosphate. The sequence is that of S-adenosylmethionine synthase (METK) from Musa acuminata (Banana).